The chain runs to 112 residues: Iron-sulfur cluster assembly protein CyaY (112 aa).

This sequence belongs to the frataxin family.

Involved in iron-sulfur (Fe-S) cluster assembly. May act as a regulator of Fe-S biogenesis. In Delftia acidovorans (strain DSM 14801 / SPH-1), this protein is Iron-sulfur cluster assembly protein CyaY.